A 663-amino-acid chain; its full sequence is Inner nuclear membrane protein HEH2 (663 aa).

2 disordered regions span residues 46–188 (QRLQ…ELPN) and 267–289 (ISET…KNIR). Residues 47-62 (RLQSSPEASKVRTSIQ) are compositionally biased toward polar residues. A compositionally biased stretch (basic and acidic residues) spans 91-123 (KTVKDENVETNKRKREQISTDNEAKMQIQEEKS). Phosphoserine is present on S123. Residues 124–134 (PKKKRKKRSSK) show a composition bias toward basic residues. Residues 124-137 (PKKKRKKRSSKANK) carry the Nuclear localization signal motif. Over residues 164-183 (EELHKKDSSDDKPRVKELPK) the composition is skewed to basic and acidic residues. Residues 317 to 337 (LFIWLWNGAIFLSIICPILFG) traverse the membrane as a helical segment.

Interacts with SRP1.

Its subcellular location is the nucleus inner membrane. The sequence is that of Inner nuclear membrane protein HEH2 (HEH2) from Saccharomyces cerevisiae (strain ATCC 204508 / S288c) (Baker's yeast).